The primary structure comprises 65 residues: Large ribosomal subunit protein bL35 (65 aa).

Positions 1 to 29 (MPKMKTNRGAAKRFKKTGSGRIKRGKAFT) are disordered. A compositionally biased stretch (basic residues) spans 10 to 26 (AAKRFKKTGSGRIKRGK).

Belongs to the bacterial ribosomal protein bL35 family.

The protein is Large ribosomal subunit protein bL35 of Desulfotalea psychrophila (strain LSv54 / DSM 12343).